A 378-amino-acid chain; its full sequence is Succinyl-diaminopimelate desuccinylase (378 aa).

His-68 contributes to the Zn(2+) binding site. Asp-70 is a catalytic residue. A Zn(2+)-binding site is contributed by Asp-101. Glu-135 serves as the catalytic Proton acceptor. 3 residues coordinate Zn(2+): Glu-136, Glu-164, and His-350.

Belongs to the peptidase M20A family. DapE subfamily. In terms of assembly, homodimer. Requires Zn(2+) as cofactor. Co(2+) serves as cofactor.

It carries out the reaction N-succinyl-(2S,6S)-2,6-diaminopimelate + H2O = (2S,6S)-2,6-diaminopimelate + succinate. The protein operates within amino-acid biosynthesis; L-lysine biosynthesis via DAP pathway; LL-2,6-diaminopimelate from (S)-tetrahydrodipicolinate (succinylase route): step 3/3. Its function is as follows. Catalyzes the hydrolysis of N-succinyl-L,L-diaminopimelic acid (SDAP), forming succinate and LL-2,6-diaminopimelate (DAP), an intermediate involved in the bacterial biosynthesis of lysine and meso-diaminopimelic acid, an essential component of bacterial cell walls. This is Succinyl-diaminopimelate desuccinylase from Vibrio atlanticus (strain LGP32) (Vibrio splendidus (strain Mel32)).